A 135-amino-acid polypeptide reads, in one-letter code: Large ribosomal subunit protein uL16c (135 aa).

This sequence belongs to the universal ribosomal protein uL16 family. Part of the 50S ribosomal subunit.

The protein resides in the plastid. It is found in the chloroplast. The sequence is that of Large ribosomal subunit protein uL16c from Vitis vinifera (Grape).